The primary structure comprises 151 residues: Large ribosomal subunit protein bL9 (151 aa).

It belongs to the bacterial ribosomal protein bL9 family.

In terms of biological role, binds to the 23S rRNA. The polypeptide is Large ribosomal subunit protein bL9 (Desulforapulum autotrophicum (strain ATCC 43914 / DSM 3382 / VKM B-1955 / HRM2) (Desulfobacterium autotrophicum)).